Here is a 422-residue protein sequence, read N- to C-terminus: UDP-N-acetylglucosamine 1-carboxyvinyltransferase (422 aa).

A phosphoenolpyruvate-binding site is contributed by 24–25; it reads KN. Arg-93 contributes to the UDP-N-acetyl-alpha-D-glucosamine binding site. Cys-117 (proton donor) is an active-site residue. 2-(S-cysteinyl)pyruvic acid O-phosphothioketal is present on Cys-117. UDP-N-acetyl-alpha-D-glucosamine-binding positions include 122–126, 162–165, Asp-307, and Ile-329; these read RPVDL and KVSV.

The protein belongs to the EPSP synthase family. MurA subfamily.

It localises to the cytoplasm. The enzyme catalyses phosphoenolpyruvate + UDP-N-acetyl-alpha-D-glucosamine = UDP-N-acetyl-3-O-(1-carboxyvinyl)-alpha-D-glucosamine + phosphate. It participates in cell wall biogenesis; peptidoglycan biosynthesis. Functionally, cell wall formation. Adds enolpyruvyl to UDP-N-acetylglucosamine. In Vibrio atlanticus (strain LGP32) (Vibrio splendidus (strain Mel32)), this protein is UDP-N-acetylglucosamine 1-carboxyvinyltransferase.